The sequence spans 515 residues: Acetyltransferase sphE (515 aa).

Catalysis depends on proton acceptor residues His-184 and Asp-438.

The protein belongs to the plant acyltransferase family. As to quaternary structure, monomer.

It catalyses the reaction sphingofungin B + acetyl-CoA = sphingofungin C + CoA. Its pathway is secondary metabolite biosynthesis. Functionally, acetyltransferase; part of the gene cluster that mediates the biosynthesis of sphingofungins, bioactive molecules acting as sphingolipid inhibitors via inhibiting serine palmitoyl transferase (SPT). Within the pathway, sphE catalyzes the O-acetylation of the C-5 hydroxyl group of sphingofungin B to produce sphingofungin C. SphE can also convert sphingofungin B1 into sphingofungin C1 and sphingofungin B2 into sphingofungin C2. Sphingofungin biosynthesis starts with the PKS sphB that produces an C18 polyketide precursor 3-hydroxyoctadeca-4,10-dienoyl-ACP containing one delta-6 desaturation and one delta-12 desaturation. The aminoacyl transferase sphA uses the sphB product to produce 3-keto-presphingofungin by adding an aminomalonate molecule. SphF then reduces the C-3 ketone of 3-keto-presphingofungin which leads to presphingofungin. The cytochrome P450 monooxygenase sphH converts presphingofungin into sphingofungin B1 which is further converted to sphingofungin B by the dioxygenase sphC. SphC is also able to convert presphingofungin into sphingofungin B2. The acetyltransferase sphE acetylates sphingofungin B to produce sphingofungin C, but can also convert sphingofungin B1 into sphingofungin C1 and sphingofungin B2 into sphingofungin C2. Finally, sphingofungin C can be spontaneously converted into sphingofungin D. This is Acetyltransferase sphE from Aspergillus fumigatus (strain CBS 144.89 / FGSC A1163 / CEA10) (Neosartorya fumigata).